A 322-amino-acid polypeptide reads, in one-letter code: Apolipoprotein E (322 aa).

The first 18 residues, 1 to 18, serve as a signal peptide directing secretion; that stretch reads MKVLWAALLVAFLAGCQG. Repeat copies occupy residues 84-105, 106-127, 128-149, 150-171, 172-193, 194-215, 216-238, and 239-260. Residues 84–260 are 8 X 22 AA approximate tandem repeats; that stretch reads ALMDETMKEL…RLDEVKEQVE (177 aa). Methionine sulfoxide is present on Met147. Phosphoserine is present on Ser151. The LDL and other lipoprotein receptors binding stretch occupies residues 162–172; that stretch reads HLRKLRKRLLR. 166–169 is a binding site for heparin; the sequence is LRKR. A lipid-binding and lipoprotein association region spans residues 214-295; it reads AATVGSSLAG…SWFEPLVEDM (82 aa). Residue Thr216 is glycosylated (O-linked (GalNAc...) threonine). 234–241 contacts heparin; sequence GERLRARM. Positions 271 to 322 are homooligomerization; sequence QQMRLQAEAFQARLKSWFEPLVEDMQRQWAGLVEKVQAAVGASAAPVPGDNH. Residues 283–295 form a specificity for association with VLDL region; it reads RLKSWFEPLVEDM.

Belongs to the apolipoprotein A1/A4/E family. As to quaternary structure, homotetramer. May interact with ABCA1; functionally associated with ABCA1 in the biogenesis of HDLs. May interact with APP/A4 amyloid-beta peptide; the interaction is extremely stable in vitro but its physiological significance is unclear. May interact with MAPT. May interact with MAP2. In the cerebrospinal fluid, interacts with secreted SORL1. Interacts with PMEL; this allows the loading of PMEL luminal fragment on ILVs to induce fibril nucleation. In terms of processing, APOE exists as multiple glycosylated and sialylated glycoforms within cells and in plasma. The extent of glycosylation and sialylation are tissue and context specific. Glycated in plasma VLDL. Post-translationally, phosphorylated by FAM20C in the extracellular medium.

The protein resides in the secreted. It localises to the extracellular space. It is found in the extracellular matrix. The protein localises to the extracellular vesicle. Its subcellular location is the endosome. The protein resides in the multivesicular body. Functionally, APOE is an apolipoprotein, a protein associating with lipid particles, that mainly functions in lipoprotein-mediated lipid transport between organs via the plasma and interstitial fluids. APOE is a core component of plasma lipoproteins and is involved in their production, conversion and clearance. Apolipoproteins are amphipathic molecules that interact both with lipids of the lipoprotein particle core and the aqueous environment of the plasma. As such, APOE associates with chylomicrons, chylomicron remnants, very low density lipoproteins (VLDL) and intermediate density lipoproteins (IDL) but shows a preferential binding to high-density lipoproteins (HDL). It also binds a wide range of cellular receptors including the LDL receptor/LDLR, the LDL receptor-related proteins LRP1, LRP2 and LRP8 and the very low-density lipoprotein receptor/VLDLR that mediate the cellular uptake of the APOE-containing lipoprotein particles. Finally, APOE also has a heparin-binding activity and binds heparan-sulfate proteoglycans on the surface of cells, a property that supports the capture and the receptor-mediated uptake of APOE-containing lipoproteins by cells. A main function of APOE is to mediate lipoprotein clearance through the uptake of chylomicrons, VLDLs, and HDLs by hepatocytes. APOE is also involved in the biosynthesis by the liver of VLDLs as well as their uptake by peripheral tissues ensuring the delivery of triglycerides and energy storage in muscle, heart and adipose tissues. By participating in the lipoprotein-mediated distribution of lipids among tissues, APOE plays a critical role in plasma and tissues lipid homeostasis. APOE is also involved in two steps of reverse cholesterol transport, the HDLs-mediated transport of cholesterol from peripheral tissues to the liver, and thereby plays an important role in cholesterol homeostasis. First, it is functionally associated with ABCA1 in the biogenesis of HDLs in tissues. Second, it is enriched in circulating HDLs and mediates their uptake by hepatocytes. APOE also plays an important role in lipid transport in the central nervous system, regulating neuron survival and sprouting. The sequence is that of Apolipoprotein E (APOE) from Ateles geoffroyi (Black-handed spider monkey).